Here is a 497-residue protein sequence, read N- to C-terminus: Lysine--tRNA ligase (497 aa).

2 residues coordinate Mg(2+): glutamate 405 and glutamate 412.

The protein belongs to the class-II aminoacyl-tRNA synthetase family. In terms of assembly, homodimer. Requires Mg(2+) as cofactor.

It is found in the cytoplasm. The enzyme catalyses tRNA(Lys) + L-lysine + ATP = L-lysyl-tRNA(Lys) + AMP + diphosphate. The chain is Lysine--tRNA ligase from Gloeobacter violaceus (strain ATCC 29082 / PCC 7421).